Reading from the N-terminus, the 142-residue chain is gSG7 salivary protein (142 aa).

An N-terminal signal peptide occupies residues 1-26 (MAVRMTVILPLAMALICLMQAEPATA). Cystine bridges form between C84–C139 and C107–C117.

In terms of assembly, associates with activated host C3-convertase complex C3bBb (C3-CFB). Interacts with host properdin (CFP), a regulator of the alternate pathway of complement. Female salivary gland (at protein level).

The protein localises to the secreted. Functionally, salivary protein that potently inhibits the alternative pathway of complement system activation in the host while having no inhibitory effect on the classical or lectin pathways. Binds and stabilizes activated host C3-convertase complex C3bBb (C3-CFB) and inhibits its convertase activity. Enhances accumulation of C3bBb on immobilized properdin. This is gSG7 salivary protein from Anopheles albimanus (New world malaria mosquito).